The following is a 365-amino-acid chain: MIKRIISIVFLLLTLPQLALAVRIKDIASFDGVRENQLIGYGLVVGLNGTGDSDQTNFPVQSLANVLERMGVTVNRNDITVKNVAAVMVTANLPPFAKQGTRIDTLVSSMGDAKSIAGGTLLMTPLKGADGRVYAVAQGGVLTNSFSYGGQAASAQKNHPTAGRVPNGGLVELELPNVLSDRGQLRLNLHQPDFTTATRIAQAVNERFKGGVAAATDPGAVMMNLPEAYKGRVVEFVADMERLEVRPDAMAKVVLNERTGTIVIGDNVRISTVAVSHGNLTLYIKETPKVSQPAPFSKTGETVVVPRTEIKVNEGGGGLAVVKEGASIGEVVRALNALGVTPRDLIGILQAIKAAGAMQAEVEVI.

Residues 1 to 21 (MIKRIISIVFLLLTLPQLALA) form the signal peptide.

Belongs to the FlgI family. The basal body constitutes a major portion of the flagellar organelle and consists of four rings (L,P,S, and M) mounted on a central rod.

The protein resides in the periplasm. The protein localises to the bacterial flagellum basal body. Its function is as follows. Assembles around the rod to form the L-ring and probably protects the motor/basal body from shearing forces during rotation. The polypeptide is Flagellar P-ring protein (Geobacter metallireducens (strain ATCC 53774 / DSM 7210 / GS-15)).